The following is a 292-amino-acid chain: 4-hydroxy-tetrahydrodipicolinate synthase (292 aa).

Residue threonine 45 coordinates pyruvate. The Proton donor/acceptor role is filled by tyrosine 133. The active-site Schiff-base intermediate with substrate is the lysine 161. Isoleucine 203 is a pyruvate binding site.

This sequence belongs to the DapA family. In terms of assembly, homotetramer; dimer of dimers.

The protein resides in the cytoplasm. The enzyme catalyses L-aspartate 4-semialdehyde + pyruvate = (2S,4S)-4-hydroxy-2,3,4,5-tetrahydrodipicolinate + H2O + H(+). The protein operates within amino-acid biosynthesis; L-lysine biosynthesis via DAP pathway; (S)-tetrahydrodipicolinate from L-aspartate: step 3/4. In terms of biological role, catalyzes the condensation of (S)-aspartate-beta-semialdehyde [(S)-ASA] and pyruvate to 4-hydroxy-tetrahydrodipicolinate (HTPA). The polypeptide is 4-hydroxy-tetrahydrodipicolinate synthase (Sodalis glossinidius (strain morsitans)).